The primary structure comprises 1240 residues: MFPYPTLNYPPMAPINPMAYRDPNPPRQVAPFRPPLAAQIEDLRRSIANLTLKQRAPNPPAGPPAKRKKPAPKPKPAQAKKKRPPPPAKKQKRKPKPGKRQRMCMKLESDKTFPIMLNGQVNGYACVVGGRVFKPLHVEGRIDNEQLAAIKLKKASIYDLEYGDVPQCMKSDTLQYTSDKPPGFYNWHHGAVQYENNRFTVPRGVGGKGDSGRPILDNKGRVVAIVLGGVNEGSRTALSVVTWNQKGVTVKDTPEGSEPWSLATVMCVLANITFPCDQPPCMPCCYEKNPHETLTMLEQNYDSRAYDQLLDAAVKCNARRTRRDLDTHFTQYKLARPYIADCPNCGHSRCDSPIAIEEVRGDAHAGVIRIQTSAMFGLKTDGVDLAYMSFMNGKTQKSIKIDNLHVRTSAPCSLVSHHGYYILAQCPPGDTVTVGFHDGPNRHTCTVAHKVEFRPVGREKYRHPPEHGVELPCNRYTHKRADQGHYVEMHQPGLVADHSLLSIHSAKVKITVPSGAQVKYYCKCPDVREGITSSDHTTTCTDVKQCRAYLIGNKKWVYNSGRLPRGEGDTFKGKLHVPFVPVKAKCIATLAPEPLVEHKHRTLILHLHPDHPTLLTTRSLGSDANPTRQWIERPTTVNFTVTGEGLEYTWGNHPPKRVWAQESGEGNPHGWPHEVVVYYYNRYPLTTIIGLCTCVAIIMVSCVHPCGSFAGLRNLCITPYKLAPNAQVPILLALLCCIKPTRADDTLQVLNYLWNNNQNFFWMQTLIPLAALIVCMRIVRCLFCCGPAFLLVCGAWAAAYEHTAVMPNKVGIPYKALVERPGYAPVHLQIQLVNTSIIPSTNLEYITCKYKTKVPSPVVKCCGATQCTSKPHPDYQCQVFTGVYPFMWGGAYCFCDTENTQMSEAYVERSEECSIDHAKAYKVHTGTVQAMVNITYGSVSWRSADVYVNGETPAKIGDAKLIIGPLSSAWSPFDNKVVVYGHEVYNYDFPEYGTGKAGSFGDLQSRTSTSNDLYANTNLKLQRPQAGIVHTPFTQAPSGFERWKRDKGAPLNDVAPFGCSIALEPLRAENCAVGSIPISIDIPDAAFTRISETPTVSDLECKITECTYASDFGGIATLPTNPVKQETVQFILHQVLQLLKRMTSPLLRAGSFTFHFSTANIHPAFKLQVCTSGVTCKGDCKPPKDHIVDYPAQHTESFTSAISATAWSWLKVLVGGTSAFIVLGLIATAVVALVLFFHRH.

The tract at residues Met-1 to Pro-35 is necessary for nucleocapsid assembly and virus assembly. The segment at Met-1–Arg-102 is disordered. Over residues Pro-23 to Pro-34 the composition is skewed to pro residues. The tract at residues Leu-36–Lys-69 is host transcription inhibition. Positions Leu-43–Leu-50 match the Supraphysiological nuclear export signal motif. An N-linked (GlcNAc...) asparagine; by host glycan is attached at Asn-49. Residues Ala-65–Arg-102 show a composition bias toward basic residues. The short motif at Lys-66–Pro-70 is the Nuclear localization signal element. Residues Lys-82–Thr-112 form a binding to the viral RNA region. Positions Pro-97 to Lys-111 are ribosome-binding. The residue at position 109 (Ser-109) is a Phosphoserine. The Peptidase S3 domain occupies Lys-111–Trp-260. Position 112 is a phosphothreonine (Thr-112). Catalysis depends on charge relay system residues His-137, Asp-159, and Ser-211. Positions Ser-261–Ile-272 are functions as an uncleaved signal peptide for the precursor of protein E3/E2. The Extracellular portion of the chain corresponds to Ser-261–Arg-682. Asn-271 and Asn-638 each carry an N-linked (GlcNAc...) asparagine; by host glycan. Residues Tyr-683 to Val-703 form a helical membrane-spanning segment. Residues His-704–Ala-743 lie on the Cytoplasmic side of the membrane. Residues Cys-706, Cys-716, Cys-736, and Cys-737 are each lipidated (S-palmitoyl cysteine; by host). The interval Leu-715–Leu-735 is transient transmembrane before p62-6K protein processing. At Asp-744–Gln-758 the chain is on the extracellular side. Residues Asn-759 to Val-779 form a helical membrane-spanning segment. Arg-780 is a topological domain (cytoplasmic). The helical transmembrane segment at Cys-781 to Glu-801 threads the bilayer. The Extracellular portion of the chain corresponds to His-802–Gly-1216. N-linked (GlcNAc...) asparagine; by host glycosylation is present at Asn-834. 4 disulfide bridges follow: Cys-848/Cys-913, Cys-861/Cys-893, Cys-862/Cys-895, and Cys-867/Cys-877. Residues Val-883–Thr-900 are E1 fusion peptide loop. Residue Asn-933 is glycosylated (N-linked (GlcNAc...) asparagine; by host). 3 disulfide bridges follow: Cys-1059-Cys-1071, Cys-1101-Cys-1176, and Cys-1106-Cys-1180. A helical transmembrane segment spans residues Thr-1217 to Phe-1237. Residues His-1238 to His-1240 are Cytoplasmic-facing.

Part of a tetrameric complex composed of host CRM1, host importin alpha/beta dimer and the viral capsid; this complex blocks the receptor-mediated transport through the nuclear pore. Interacts with host phosphatase PPP1CA; this interaction dephosphorylates the capsid protein, which increases its ability to bind to the viral genome. Interacts with host karyopherin KPNA4; this interaction allows the nuclear import of the viral capsid protein. Interacts with spike glycoprotein E2. Interacts with host IRAK1; the interaction leads to inhibition of IRAK1-dependent signaling. In terms of assembly, the precursor of protein E3/E2 and E1 form a heterodimer shortly after synthesis. As to quaternary structure, the precursor of protein E3/E2 and E1 form a heterodimer shortly after synthesis. Processing of the precursor of protein E3/E2 into E2 and E3 results in a heterodimer of the spike glycoproteins E2 and E1. Spike at virion surface are constituted of three E2-E1 heterodimers. After target cell attachment and endocytosis, E1 change conformation to form homotrimers. Interacts with 6K protein. Processing of the precursor of protein E3/E2 into E2 and E3 results in a heterodimer of the spike glycoproteins E2 and E1. Spike at virion surface are constituted of three E2-E1 heterodimers. Interacts with 6K protein. In terms of assembly, interacts with spike glycoprotein E1. Interacts with spike glycoprotein E2. In terms of processing, structural polyprotein: Specific enzymatic cleavages in vivo yield mature proteins. Capsid protein is auto-cleaved during polyprotein translation, unmasking a signal peptide at the N-terminus of the precursor of E3/E2. The remaining polyprotein is then targeted to the host endoplasmic reticulum, where host signal peptidase cleaves it into pE2, 6K and E1 proteins. pE2 is further processed to mature E3 and E2 by host furin in trans-Golgi vesicle. Post-translationally, phosphorylated on serine and threonine residues. Palmitoylated via thioester bonds. These palmitoylations may induce disruption of the C-terminus transmembrane. This would result in the reorientation of E2 C-terminus from lumenal to cytoplasmic side. In terms of processing, N-glycosylated. Post-translationally, palmitoylated via thioester bonds.

It localises to the virion. It is found in the host cytoplasm. The protein resides in the host cell membrane. Its subcellular location is the host nucleus. The protein localises to the virion membrane. It carries out the reaction Autocatalytic release of the core protein from the N-terminus of the togavirus structural polyprotein by hydrolysis of a -Trp-|-Ser- bond.. Functionally, forms an icosahedral capsid with a T=4 symmetry composed of 240 copies of the capsid protein surrounded by a lipid membrane through which penetrate 80 spikes composed of trimers of E1-E2 heterodimers. The capsid protein binds to the viral RNA genome at a site adjacent to a ribosome binding site for viral genome translation following genome release. Possesses a protease activity that results in its autocatalytic cleavage from the nascent structural protein. Following its self-cleavage, the capsid protein transiently associates with ribosomes, and within several minutes the protein binds to viral RNA and rapidly assembles into icosahedric core particles. The resulting nucleocapsid eventually associates with the cytoplasmic domain of the spike glycoprotein E2 at the cell membrane, leading to budding and formation of mature virions. In case of infection, new virions attach to target cells and after clathrin-mediated endocytosis their membrane fuses with the host endosomal membrane. This leads to the release of the nucleocapsid into the cytoplasm, followed by an uncoating event necessary for the genomic RNA to become accessible. The uncoating might be triggered by the interaction of capsid proteins with ribosomes. Binding of ribosomes would release the genomic RNA since the same region is genomic RNA-binding and ribosome-binding. Specifically inhibits interleukin-1 receptor-associated kinase 1/IRAK1-dependent signaling during viral entry, representing a means by which the alphaviruses may evade innate immune detection and activation prior to viral gene expression. Inhibits host transcription. Forms a tetrameric complex with XPO1/CRM1 and the nuclear import receptor importin. This complex blocks the central channel of host nuclear pores thereby inhibiting the receptor-mediated nuclear transport and thus the host mRNA and rRNA transcription. The inhibition of transcription is linked to a cytopathic effect on the host cell. Its function is as follows. Provides the signal sequence for the translocation of the precursor of protein E3/E2 to the host endoplasmic reticulum. Furin-cleaved E3 remains associated with spike glycoprotein E1 and mediates pH protection of the latter during the transport via the secretory pathway. After virion release from the host cell, the assembly protein E3 is gradually released in the extracellular space. In terms of biological role, plays a role in viral attachment to target host cell, by binding to the cell receptor. Synthesized as a p62 precursor which is processed by furin at the cell membrane just before virion budding, giving rise to E2-E1 heterodimer. The p62-E1 heterodimer is stable, whereas E2-E1 is unstable and dissociate at low pH. p62 is processed at the last step, presumably to avoid E1 fusion activation before its final export to cell surface. E2 C-terminus contains a transitory transmembrane that would be disrupted by palmitoylation, resulting in reorientation of the C-terminal tail from lumenal to cytoplasmic side. This step is critical since E2 C-terminus is involved in budding by interacting with capsid proteins. This release of E2 C-terminus in cytoplasm occurs lately in protein export, and precludes premature assembly of particles at the endoplasmic reticulum membrane. Constitutive membrane protein involved in virus glycoprotein processing, cell permeabilization, and the budding of viral particles. Disrupts the calcium homeostasis of the cell, probably at the endoplasmic reticulum level. This leads to cytoplasmic calcium elevation. Because of its lipophilic properties, the 6K protein is postulated to influence the selection of lipids that interact with the transmembrane domains of the glycoproteins, which, in turn, affects the deformability of the bilayer required for the extreme curvature that occurs as budding proceeds. Present in low amount in virions, about 3% compared to viral glycoproteins. Functionally, class II viral fusion protein. Fusion activity is inactive as long as E1 is bound to E2 in mature virion. After virus attachment to target cell and endocytosis, acidification of the endosome would induce dissociation of E1/E2 heterodimer and concomitant trimerization of the E1 subunits. This E1 trimer is fusion active, and promotes release of viral nucleocapsid in cytoplasm after endosome and viral membrane fusion. Efficient fusion requires the presence of cholesterol and sphingolipid in the target membrane. Fusion is optimal at levels of about 1 molecule of cholesterol per 2 molecules of phospholipids, and is specific for sterols containing a 3-beta-hydroxyl group. The chain is Structural polyprotein from Eastern equine encephalitis virus (strain va33[ten broeck]) (EEEV).